Consider the following 495-residue polypeptide: Guanosine-5'-triphosphate,3'-diphosphate pyrophosphatase (495 aa).

Belongs to the GppA/Ppx family. GppA subfamily.

It carries out the reaction guanosine 3'-diphosphate 5'-triphosphate + H2O = guanosine 3',5'-bis(diphosphate) + phosphate + H(+). Its pathway is purine metabolism; ppGpp biosynthesis; ppGpp from GTP: step 2/2. Functionally, catalyzes the conversion of pppGpp to ppGpp. Guanosine pentaphosphate (pppGpp) is a cytoplasmic signaling molecule which together with ppGpp controls the 'stringent response', an adaptive process that allows bacteria to respond to amino acid starvation, resulting in the coordinated regulation of numerous cellular activities. The polypeptide is Guanosine-5'-triphosphate,3'-diphosphate pyrophosphatase (Enterobacter sp. (strain 638)).